A 351-amino-acid chain; its full sequence is uncharacterized protein (351 aa).

The region spanning 14–69 (PRLADIAAQAQVSEATASRVLNGRPASRXSTRQRVLAALDLLGYERPTRLRRRSAG) is the HTH lacI-type domain. The segment at residues 16–35 (LADIAAQAQVSEATASRVLN) is a DNA-binding region (H-T-H motif).

Functionally, putative sugar-binding regulatory protein for the alpha-amylase gene. This is an uncharacterized protein from Streptomyces limosus (Streptomyces albidoflavus).